Reading from the N-terminus, the 151-residue chain is UPF0208 membrane protein NT01EI_2692 (151 aa).

The next 2 helical transmembrane spans lie at 46-65 and 69-91; these read FAIR…QIAL and LGPA…WWLG.

This sequence belongs to the UPF0208 family.

The protein localises to the cell inner membrane. This Edwardsiella ictaluri (strain 93-146) protein is UPF0208 membrane protein NT01EI_2692.